The chain runs to 86 residues: U13-theraphotoxin-Cg1b (86 aa).

A signal peptide spans 1–21 (MKVSVLITLAVLGVMFVWASA). Positions 22–51 (AELEQSGSDQKDSPAWLKSMERIFQSEERE) are excised as a propeptide. Intrachain disulfides connect Cys-52–Cys-66, Cys-59–Cys-71, and Cys-65–Cys-78.

This sequence belongs to the neurotoxin 10 (Hwtx-1) family. 41 (Jztx-36) subfamily. Expressed by the venom gland.

The protein resides in the secreted. Its function is as follows. Probable ion channel inhibitor. This Chilobrachys guangxiensis (Chinese earth tiger tarantula) protein is U13-theraphotoxin-Cg1b.